A 155-amino-acid polypeptide reads, in one-letter code: Snaclec bothrojaracin subunit alpha (155 aa).

Positions 1–23 (MGRFLFVSFGLLVVFLSLSGTAA) are cleaved as a signal peptide. Intrachain disulfides connect cysteine 25–cysteine 36, cysteine 53–cysteine 150, and cysteine 125–cysteine 142. The C-type lectin domain occupies 32 to 151 (HEGHCYKFFQ…CGQQNPFVCK (120 aa)).

Belongs to the snaclec family. As to quaternary structure, heterodimer of subunits alpha and beta; disulfide-linked. In terms of tissue distribution, expressed by the venom gland.

The protein resides in the secreted. In terms of biological role, this potent antithrombotic agent acts in a calcium-independent manner. Exerts its anticoagulant effect by two distinct mechanisms. It binds to activated thrombin through exosite 1, blocking fibrinogen clotting, platelet activation, factor V activation and other effects, and it interacts with prothrombin (F2), decreasing its proteolytic activation -especially in the presence of factor Va. In vivo, intravenous injection before thrombosis induction causes a significant decrease in thrombus weight. Furthermore, BJC shows a prolonged effect by remaining in the plasma bound to prothrombin for at least 12 hours. The protein is Snaclec bothrojaracin subunit alpha of Bothrops jararaca (Jararaca).